Consider the following 200-residue polypeptide: Recombination protein RecR (200 aa).

The C4-type zinc-finger motif lies at 60–75; it reads CVYCQALTEDDVCNIC. A Toprim domain is found at 83–177; the sequence is TKLCIIESML…KISRIGFGVP (95 aa).

This sequence belongs to the RecR family.

Functionally, may play a role in DNA repair. It seems to be involved in an RecBC-independent recombinational process of DNA repair. It may act with RecF and RecO. The protein is Recombination protein RecR of Francisella tularensis subsp. tularensis (strain WY96-3418).